A 110-amino-acid polypeptide reads, in one-letter code: Large ribosomal subunit protein uL22 (110 aa).

Belongs to the universal ribosomal protein uL22 family. Part of the 50S ribosomal subunit.

This protein binds specifically to 23S rRNA; its binding is stimulated by other ribosomal proteins, e.g. L4, L17, and L20. It is important during the early stages of 50S assembly. It makes multiple contacts with different domains of the 23S rRNA in the assembled 50S subunit and ribosome. Functionally, the globular domain of the protein is located near the polypeptide exit tunnel on the outside of the subunit, while an extended beta-hairpin is found that lines the wall of the exit tunnel in the center of the 70S ribosome. The sequence is that of Large ribosomal subunit protein uL22 from Paracidovorax citrulli (strain AAC00-1) (Acidovorax citrulli).